The chain runs to 132 residues: Phycocyanin PC645 alpha-1 subunit (132 aa).

(2R,3E)-phycocyanobilin contacts are provided by D54 and R68. Positions 70, 76, 77, and 92 each coordinate mesobiliverdin. 15,16-dihydrobiliverdin-binding residues include P123 and I125.

This sequence belongs to the phycoerythrin family. Heterotetramer of 2 different alpha chains and 2 identical beta chains which form 2 alpha-beta heterodimers within the heterotetramer. Post-translationally, contains two phycocyanobilin chromophores, one mesobiliverdin chromophore and one 15,16-dihydrobiliverdin chromophore with binding mediated by both the alpha and beta subunits.

The protein localises to the plastid. It is found in the chloroplast thylakoid membrane. In terms of biological role, light-harvesting photosynthetic tetrapyrrole chromophore-protein from the phycobiliprotein complex. The sequence is that of Phycocyanin PC645 alpha-1 subunit from Chroomonas sp. (strain CCMP270).